We begin with the raw amino-acid sequence, 215 residues long: GTP-binding protein YPT6 (215 aa).

17-24 lines the GTP pocket; it reads GEQGVGKT. Residues 39-47 carry the Effector region motif; that stretch reads YQATIGIDF. Residues 65–69 and 124–127 contribute to the GTP site; these read DTAGQ and NKSD. The segment covering 178–196 has biased composition (polar residues); it reads NSESTPLDSENANSANQNK. The disordered stretch occupies residues 178–215; the sequence is NSESTPLDSENANSANQNKPGVIDISTAEEQEQSACQC. S-geranylgeranyl cysteine attachment occurs at residues Cys213 and Cys215. Residue Cys215 is modified to Cysteine methyl ester.

This sequence belongs to the small GTPase superfamily. Rab family. Interacts with YIF1, YIP3 and YIP4.

The protein resides in the cell membrane. Its function is as follows. Protein transport. Might participate in post-Golgi transport. The polypeptide is GTP-binding protein YPT6 (YPT6) (Saccharomyces cerevisiae (strain ATCC 204508 / S288c) (Baker's yeast)).